A 217-amino-acid chain; its full sequence is 25 kDa ookinete surface antigen (217 aa).

The first 16 residues, 1 to 16 (MNKLYSLFLFLFIQLS), serve as a signal peptide directing secretion. The region spanning 30-59 (CKKGFLIQMSGHLECKCENDLVLVNEETCE) is the EGF-like 1; truncated domain. EGF-like domains lie at 61–106 (KVLK…NVCI), 106–150 (ILNE…NKCS), and 153–193 (GETK…STCT). Intrachain disulfides connect C65/C80, C74/C92, C94/C105, C110/C120, C115/C133, C135/C149, C157/C168, C161/C177, and C179/C192. N112 carries an N-linked (GlcNAc...) asparagine glycan. N-linked (GlcNAc...) asparagine glycosylation is found at N165 and N187. S196 carries the GPI-anchor amidated serine lipid modification. Positions 197–217 (VYNILNLSLIFVLFSVCFFIM) are cleaved as a propeptide — removed in mature form. N-linked (GlcNAc...) asparagine glycosylation is present at N202.

The protein resides in the cell membrane. The protein is 25 kDa ookinete surface antigen of Plasmodium reichenowi.